The following is a 254-amino-acid chain: tRNA (guanine-N(7)-)-methyltransferase (254 aa).

4 residues coordinate S-adenosyl-L-methionine: Glu-82, Glu-107, Asp-134, and Asp-157. The active site involves Asp-157. Substrate-binding positions include Lys-161, Asp-193, and 233–236 (TKFE).

Belongs to the class I-like SAM-binding methyltransferase superfamily. TrmB family.

The catalysed reaction is guanosine(46) in tRNA + S-adenosyl-L-methionine = N(7)-methylguanosine(46) in tRNA + S-adenosyl-L-homocysteine. It functions in the pathway tRNA modification; N(7)-methylguanine-tRNA biosynthesis. Catalyzes the formation of N(7)-methylguanine at position 46 (m7G46) in tRNA. The chain is tRNA (guanine-N(7)-)-methyltransferase from Corynebacterium jeikeium (strain K411).